We begin with the raw amino-acid sequence, 119 residues long: Holo-[acyl-carrier-protein] synthase (119 aa).

Residues D8 and E58 each contribute to the Mg(2+) site.

It belongs to the P-Pant transferase superfamily. AcpS family. The cofactor is Mg(2+).

The protein localises to the cytoplasm. It carries out the reaction apo-[ACP] + CoA = holo-[ACP] + adenosine 3',5'-bisphosphate + H(+). Transfers the 4'-phosphopantetheine moiety from coenzyme A to a Ser of acyl-carrier-protein. The chain is Holo-[acyl-carrier-protein] synthase from Bacillus cereus (strain ATCC 14579 / DSM 31 / CCUG 7414 / JCM 2152 / NBRC 15305 / NCIMB 9373 / NCTC 2599 / NRRL B-3711).